Consider the following 30-residue polypeptide: Kalata-B14 (30 aa).

Residues 1-30 (GLPVCGESCFGGTCNTPGCACDPWPVCTRD) constitute a cross-link (cyclopeptide (Gly-Asp)). 3 cysteine pairs are disulfide-bonded: Cys5–Cys19, Cys9–Cys21, and Cys14–Cys27.

This is a cyclic peptide.

In terms of biological role, probably participates in a plant defense mechanism. This chain is Kalata-B14, found in Oldenlandia affinis.